Consider the following 764-residue polypeptide: Protein translocase subunit SecA 2 (764 aa).

ATP-binding positions include Q83, 101–105 (GEGKT), and D490.

Belongs to the SecA family. As to quaternary structure, monomer and homodimer. Part of the essential Sec protein translocation apparatus which comprises SecA, SecYEG and auxiliary proteins SecDF. Other proteins may also be involved.

The protein resides in the cell membrane. The protein localises to the cytoplasm. It catalyses the reaction ATP + H2O + cellular proteinSide 1 = ADP + phosphate + cellular proteinSide 2.. In terms of biological role, part of the Sec protein translocase complex. Interacts with the SecYEG preprotein conducting channel. Has a central role in coupling the hydrolysis of ATP to the transfer of proteins into and across the cell membrane, serving as an ATP-driven molecular motor driving the stepwise translocation of polypeptide chains across the membrane. The protein is Protein translocase subunit SecA 2 of Corynebacterium diphtheriae (strain ATCC 700971 / NCTC 13129 / Biotype gravis).